Consider the following 392-residue polypeptide: AAA-ATPase At5g17750 (392 aa).

The helical transmembrane segment at 13–35 (MFSTYASLAGYIMMIKPMIHTII) threads the bilayer. 227-234 (GPPGTGKS) lines the ATP pocket.

The protein belongs to the AAA ATPase family. BCS1 subfamily. It depends on Mg(2+) as a cofactor.

It is found in the membrane. It catalyses the reaction ATP + H2O = ADP + phosphate + H(+). The chain is AAA-ATPase At5g17750 from Arabidopsis thaliana (Mouse-ear cress).